A 125-amino-acid chain; its full sequence is uncharacterized protein (125 aa).

It belongs to the HesB/IscA family.

This is an uncharacterized protein from Azospirillum brasilense.